The primary structure comprises 114 residues: Large ribosomal subunit protein uL22 (114 aa).

This sequence belongs to the universal ribosomal protein uL22 family. As to quaternary structure, part of the 50S ribosomal subunit.

Its function is as follows. This protein binds specifically to 23S rRNA; its binding is stimulated by other ribosomal proteins, e.g. L4, L17, and L20. It is important during the early stages of 50S assembly. It makes multiple contacts with different domains of the 23S rRNA in the assembled 50S subunit and ribosome. The globular domain of the protein is located near the polypeptide exit tunnel on the outside of the subunit, while an extended beta-hairpin is found that lines the wall of the exit tunnel in the center of the 70S ribosome. In Streptococcus uberis (strain ATCC BAA-854 / 0140J), this protein is Large ribosomal subunit protein uL22.